Here is a 128-residue protein sequence, read N- to C-terminus: Large ribosomal subunit protein bL17 (128 aa).

The protein belongs to the bacterial ribosomal protein bL17 family. Part of the 50S ribosomal subunit. Contacts protein L32.

This Streptococcus pyogenes serotype M5 (strain Manfredo) protein is Large ribosomal subunit protein bL17.